Here is a 129-residue protein sequence, read N- to C-terminus: UPF0148 protein APE_0207 (129 aa).

Belongs to the UPF0148 family.

In Aeropyrum pernix (strain ATCC 700893 / DSM 11879 / JCM 9820 / NBRC 100138 / K1), this protein is UPF0148 protein APE_0207.